Consider the following 312-residue polypeptide: Acetyl-coenzyme A carboxylase carboxyl transferase subunit beta (312 aa).

Positions 24 to 293 (LWIKCPDSGQ…PHADEVAAPP (270 aa)) constitute a CoA carboxyltransferase N-terminal domain. The segment at 286 to 312 (ADEVAAPPPPDVEGPPPAAEPVALPPA) is disordered. The segment covering 291-312 (APPPPDVEGPPPAAEPVALPPA) has biased composition (pro residues).

This sequence belongs to the AccD/PCCB family. Acetyl-CoA carboxylase is a heterohexamer composed of biotin carboxyl carrier protein (AccB), biotin carboxylase (AccC) and two subunits each of ACCase subunit alpha (AccA) and ACCase subunit beta (AccD).

The protein localises to the cytoplasm. The catalysed reaction is N(6)-carboxybiotinyl-L-lysyl-[protein] + acetyl-CoA = N(6)-biotinyl-L-lysyl-[protein] + malonyl-CoA. Its pathway is lipid metabolism; malonyl-CoA biosynthesis; malonyl-CoA from acetyl-CoA: step 1/1. Its function is as follows. Component of the acetyl coenzyme A carboxylase (ACC) complex. Biotin carboxylase (BC) catalyzes the carboxylation of biotin on its carrier protein (BCCP) and then the CO(2) group is transferred by the transcarboxylase to acetyl-CoA to form malonyl-CoA. The chain is Acetyl-coenzyme A carboxylase carboxyl transferase subunit beta from Afipia carboxidovorans (strain ATCC 49405 / DSM 1227 / KCTC 32145 / OM5) (Oligotropha carboxidovorans).